Reading from the N-terminus, the 147-residue chain is 3-dehydroquinate dehydratase (147 aa).

Residue Tyr23 is the Proton acceptor of the active site. Asn74, His80, and Asp87 together coordinate substrate. His100 serves as the catalytic Proton donor. Substrate contacts are provided by residues 101 to 102 (LS) and Arg111.

This sequence belongs to the type-II 3-dehydroquinase family. As to quaternary structure, homododecamer.

The enzyme catalyses 3-dehydroquinate = 3-dehydroshikimate + H2O. Its pathway is metabolic intermediate biosynthesis; chorismate biosynthesis; chorismate from D-erythrose 4-phosphate and phosphoenolpyruvate: step 3/7. In terms of biological role, catalyzes a trans-dehydration via an enolate intermediate. This Clostridium botulinum (strain Okra / Type B1) protein is 3-dehydroquinate dehydratase.